The chain runs to 351 residues: Dihydroorotate dehydrogenase (quinone) (351 aa).

FMN contacts are provided by residues Ala-61–Lys-65 and Thr-85. Lys-65 contributes to the substrate binding site. Position 110–114 (Asn-110–Phe-114) interacts with substrate. Positions 139 and 172 each coordinate FMN. Asn-172 lines the substrate pocket. Ser-175 acts as the Nucleophile in catalysis. A substrate-binding site is contributed by Asn-177. Residues Lys-217 and Thr-245 each coordinate FMN. Asn-246–Thr-247 contacts substrate. Residues Gly-268, Gly-297, and Tyr-318–Ser-319 each bind FMN.

The protein belongs to the dihydroorotate dehydrogenase family. Type 2 subfamily. As to quaternary structure, monomer. FMN serves as cofactor.

It localises to the cell membrane. The enzyme catalyses (S)-dihydroorotate + a quinone = orotate + a quinol. It functions in the pathway pyrimidine metabolism; UMP biosynthesis via de novo pathway; orotate from (S)-dihydroorotate (quinone route): step 1/1. Functionally, catalyzes the conversion of dihydroorotate to orotate with quinone as electron acceptor. The polypeptide is Dihydroorotate dehydrogenase (quinone) (Xanthomonas oryzae pv. oryzae (strain MAFF 311018)).